Here is a 251-residue protein sequence, read N- to C-terminus: uncharacterized protein (251 aa).

It belongs to the methyltransferase superfamily.

It is found in the cytoplasm. It localises to the nucleus. Probable methyltransferase. This is an uncharacterized protein from Schizosaccharomyces pombe (strain 972 / ATCC 24843) (Fission yeast).